The chain runs to 142 residues: Large ribosomal subunit protein uL11 (142 aa).

This sequence belongs to the universal ribosomal protein uL11 family. Part of the ribosomal stalk of the 50S ribosomal subunit. Interacts with L10 and the large rRNA to form the base of the stalk. L10 forms an elongated spine to which L12 dimers bind in a sequential fashion forming a multimeric L10(L12)X complex. In terms of processing, one or more lysine residues are methylated.

Functionally, forms part of the ribosomal stalk which helps the ribosome interact with GTP-bound translation factors. The sequence is that of Large ribosomal subunit protein uL11 from Photobacterium profundum (strain SS9).